A 311-amino-acid polypeptide reads, in one-letter code: Transcriptional regulatory protein MoaR1 (311 aa).

Positions 15 to 117 (LNATTAGAVQ…SEPPGYRLLI (103 aa)) form a DNA-binding region, ompR/PhoB-type.

It belongs to the AfsR/DnrI/RedD regulatory family.

Its function is as follows. Acts as a positive transcriptional regulator of the molybdopterin biosynthesis moa1 locus, promoting the expression of the moaA1B1C1D1 genes. The sequence is that of Transcriptional regulatory protein MoaR1 (moaR1) from Mycobacterium bovis (strain BCG / Pasteur 1173P2).